A 118-amino-acid chain; its full sequence is Light-harvesting protein B-800/850 gamma chain (118 aa).

Seems to be required for the LH-II stabilization. The polypeptide is Light-harvesting protein B-800/850 gamma chain (pucE) (Rhodobacter capsulatus (Rhodopseudomonas capsulata)).